The following is a 204-amino-acid chain: tRNA (pseudouridine(54)-N(1))-methyltransferase (204 aa).

The S-adenosyl-L-methionine site is built by Leu-136 and Gly-158.

Belongs to the methyltransferase superfamily. TrmY family. Homodimer.

Its subcellular location is the cytoplasm. The catalysed reaction is pseudouridine(54) in tRNA + S-adenosyl-L-methionine = N(1)-methylpseudouridine(54) in tRNA + S-adenosyl-L-homocysteine + H(+). Specifically catalyzes the N1-methylation of pseudouridine at position 54 (Psi54) in tRNAs. The chain is tRNA (pseudouridine(54)-N(1))-methyltransferase from Pyrococcus abyssi (strain GE5 / Orsay).